The chain runs to 129 residues: Small ribosomal subunit protein uS9 (129 aa).

The interval 97–129 (LKAQGFLTRDPRKKERKKYGRKKARKSFQFSKR) is disordered. Residues 110–129 (KERKKYGRKKARKSFQFSKR) are compositionally biased toward basic residues.

This sequence belongs to the universal ribosomal protein uS9 family.

The polypeptide is Small ribosomal subunit protein uS9 (Chlamydia trachomatis serovar A (strain ATCC VR-571B / DSM 19440 / HAR-13)).